The following is a 147-amino-acid chain: Lysozyme C-2 (147 aa).

The N-terminal stretch at 1–18 is a signal peptide; the sequence is MKALVILGFLFLSVAVQG. The C-type lysozyme domain occupies 19 to 147; sequence KVFERCELAR…VSSYVEGCTL (129 aa). 4 disulfides stabilise this stretch: C24-C145, C48-C133, C83-C99, and C95-C113. Catalysis depends on residues E53 and D71.

It belongs to the glycosyl hydrolase 22 family. In terms of assembly, monomer. In terms of tissue distribution, stomach-specific.

It carries out the reaction Hydrolysis of (1-&gt;4)-beta-linkages between N-acetylmuramic acid and N-acetyl-D-glucosamine residues in a peptidoglycan and between N-acetyl-D-glucosamine residues in chitodextrins.. In terms of biological role, lysozymes have primarily a bacteriolytic function; those in tissues and body fluids are associated with the monocyte-macrophage system and enhance the activity of immunoagents. This Bos taurus (Bovine) protein is Lysozyme C-2 (LYZ2).